The following is a 465-amino-acid chain: Ribosomal oxygenase 2 (465 aa).

Residues 139 to 271 form the JmjC domain; that stretch reads QPQRFKDELW…NSWGDFLLDT (133 aa). His179, Asp181, and His240 together coordinate Fe cation. Ser309 bears the Phosphoserine mark.

The protein belongs to the ROX family. MINA53 subfamily. It depends on Fe(2+) as a cofactor.

Its subcellular location is the nucleus. The protein resides in the nucleolus. It catalyses the reaction L-histidyl-[ribosomal protein uL15] + 2-oxoglutarate + O2 = (3S)-3-hydroxy-L-histidyl-[ribosomal protein uL15] + succinate + CO2. It carries out the reaction L-histidyl-[protein] + 2-oxoglutarate + O2 = (3S)-3-hydroxy-L-histidyl-[protein] + succinate + CO2. Functionally, oxygenase that can act as both a histone lysine demethylase and a ribosomal histidine hydroxylase. Is involved in the demethylation of trimethylated 'Lys-9' on histone H3 (H3K9me3), leading to an increase in ribosomal RNA expression. Also catalyzes the hydroxylation of 60S ribosomal protein L27a on 'His-39'. May play an important role in cell growth and survival. May be involved in ribosome biogenesis, most likely during the assembly process of pre-ribosomal particles. The polypeptide is Ribosomal oxygenase 2 (RIOX2) (Pongo abelii (Sumatran orangutan)).